We begin with the raw amino-acid sequence, 225 residues long: Ribosome maturation factor RimM (225 aa).

Residues 144–225 (ADEFYWVDLI…RIVVDWEADY (82 aa)) form the PRC barrel domain.

It belongs to the RimM family. As to quaternary structure, binds ribosomal protein uS19.

The protein localises to the cytoplasm. An accessory protein needed during the final step in the assembly of 30S ribosomal subunit, possibly for assembly of the head region. Essential for efficient processing of 16S rRNA. May be needed both before and after RbfA during the maturation of 16S rRNA. It has affinity for free ribosomal 30S subunits but not for 70S ribosomes. This chain is Ribosome maturation factor RimM, found in Burkholderia lata (strain ATCC 17760 / DSM 23089 / LMG 22485 / NCIMB 9086 / R18194 / 383).